The chain runs to 220 residues: UPF0319 protein YccT (220 aa).

The first 20 residues, M1–A20, serve as a signal peptide directing secretion.

It belongs to the UPF0319 family.

This chain is UPF0319 protein YccT, found in Shigella flexneri serotype 5b (strain 8401).